The sequence spans 507 residues: MEQLKIDLNLGRSQQHDFIYPLIFQEYIYALAHDRGLNRSIFLENAGYDNKFSLLIVKRLITHLITQMYQQNHFLFSVNDSNQKKILGYNTNLYSQMIFEGFAVVVEIPFYLRLLSFLEGKERMKSHNLRSIHSIFPFLEDKFAFLNYVLDIQIPHPIHLEIFIQTLRYWVKDASSLHLLRFFLHEYPIWNSFLIRKKSSFSFSKRNQRFFFFLYNFHVCEYESIFVFLRNQSFHLRSISYETFLERISFYRKIELEEVFTKDFKAILWVFKEPFLHYVRYRGNALLASKGTSLLMNKWKHYIVNFWQCYFYIWSQPRRIDINQLSNHSLDFLGYLSSVRLKHLMVRSQMIENSFLIENASKKFDTLMPITPMIGSLSKAKFCNVLGHPMSKPAWSALSDSDIIERFGRIYRNLSHYYSGSLKKRNLYRIKYILRLSCARTLARKHKSTVRAFLKRLGMGLLEEFFTEEEQVFYLTLPKASSTSGELYRRRVWYLDIICINHMSNYE.

The protein belongs to the intron maturase 2 family. MatK subfamily.

The protein localises to the plastid. The protein resides in the chloroplast. Its function is as follows. Usually encoded in the trnK tRNA gene intron. Probably assists in splicing its own and other chloroplast group II introns. The protein is Maturase K of Kalmia procumbens (Alpine azalea).